The sequence spans 411 residues: Phosphoglycerate kinase (411 aa).

Substrate contacts are provided by residues 22 to 24, R37, 60 to 63, R123, and R165; these read DFN and HLSR. ATP-binding positions include K216, E339, and 366 to 369; that span reads GGDS.

Belongs to the phosphoglycerate kinase family. As to quaternary structure, monomer.

The protein localises to the cytoplasm. It carries out the reaction (2R)-3-phosphoglycerate + ATP = (2R)-3-phospho-glyceroyl phosphate + ADP. The protein operates within carbohydrate degradation; glycolysis; pyruvate from D-glyceraldehyde 3-phosphate: step 2/5. This Mycoplasma genitalium (strain ATCC 33530 / DSM 19775 / NCTC 10195 / G37) (Mycoplasmoides genitalium) protein is Phosphoglycerate kinase (pgk).